Consider the following 549-residue polypeptide: Glucose-6-phosphate isomerase (549 aa).

E355 functions as the Proton donor in the catalytic mechanism. Catalysis depends on residues H386 and K514.

It belongs to the GPI family.

It is found in the cytoplasm. It catalyses the reaction alpha-D-glucose 6-phosphate = beta-D-fructose 6-phosphate. The protein operates within carbohydrate biosynthesis; gluconeogenesis. It functions in the pathway carbohydrate degradation; glycolysis; D-glyceraldehyde 3-phosphate and glycerone phosphate from D-glucose: step 2/4. Its function is as follows. Catalyzes the reversible isomerization of glucose-6-phosphate to fructose-6-phosphate. The sequence is that of Glucose-6-phosphate isomerase from Buchnera aphidicola subsp. Acyrthosiphon pisum (strain APS) (Acyrthosiphon pisum symbiotic bacterium).